A 433-amino-acid polypeptide reads, in one-letter code: Glutamate-1-semialdehyde 2,1-aminomutase (433 aa).

Position 270 is an N6-(pyridoxal phosphate)lysine (Lys270).

The protein belongs to the class-III pyridoxal-phosphate-dependent aminotransferase family. HemL subfamily. As to quaternary structure, homodimer. The cofactor is pyridoxal 5'-phosphate.

It localises to the cytoplasm. It carries out the reaction (S)-4-amino-5-oxopentanoate = 5-aminolevulinate. It participates in porphyrin-containing compound metabolism; protoporphyrin-IX biosynthesis; 5-aminolevulinate from L-glutamyl-tRNA(Glu): step 2/2. The sequence is that of Glutamate-1-semialdehyde 2,1-aminomutase from Symbiobacterium thermophilum (strain DSM 24528 / JCM 14929 / IAM 14863 / T).